Consider the following 246-residue polypeptide: Anionic trypsin-2 (246 aa).

A signal peptide spans 1–15 (MSALLILALVGAAVA). A propeptide spans 16–23 (FPVDDDDK) (activation peptide). The region spanning 24–244 (IVGGYTCRES…YVDWIQNTIA (221 aa)) is the Peptidase S1 domain. Intrachain disulfides connect C30/C160, C48/C64, C132/C233, C139/C206, C171/C185, and C196/C220. H63 functions as the Charge relay system in the catalytic mechanism. Positions 75, 77, 80, and 85 each coordinate Ca(2+). D107 (charge relay system) is an active-site residue. S200 acts as the Charge relay system in catalysis.

It belongs to the peptidase S1 family. Ca(2+) serves as cofactor. In terms of tissue distribution, expressed in the pancreas, lung and kidney.

The protein resides in the secreted. The protein localises to the extracellular space. It carries out the reaction Preferential cleavage: Arg-|-Xaa, Lys-|-Xaa.. The sequence is that of Anionic trypsin-2 (Prss2) from Mus musculus (Mouse).